The chain runs to 364 residues: Protein RecA (364 aa).

Residue 77–84 (GPESSGKT) coordinates ATP. Positions 343–364 (DRFLQNGGPDPDDGDGDATAEM) are disordered. The span at 352-364 (DPDDGDGDATAEM) shows a compositional bias: acidic residues.

It belongs to the RecA family.

Its subcellular location is the cytoplasm. Its function is as follows. Can catalyze the hydrolysis of ATP in the presence of single-stranded DNA, the ATP-dependent uptake of single-stranded DNA by duplex DNA, and the ATP-dependent hybridization of homologous single-stranded DNAs. It interacts with LexA causing its activation and leading to its autocatalytic cleavage. This chain is Protein RecA, found in Rhizobium johnstonii (strain DSM 114642 / LMG 32736 / 3841) (Rhizobium leguminosarum bv. viciae).